Consider the following 251-residue polypeptide: Probable transcriptional regulatory protein SYNPCC7002_A0851 (251 aa).

The Response regulatory domain occupies 20–141 (RILVVEDEAV…ELVARCRALL (122 aa)). D76 bears the 4-aspartylphosphate mark. Positions 153 to 251 (NSVRQFKDIS…TVRGFGYRFG (99 aa)) form a DNA-binding region, ompR/PhoB-type.

Post-translationally, phosphorylation.

This chain is Probable transcriptional regulatory protein SYNPCC7002_A0851, found in Picosynechococcus sp. (strain ATCC 27264 / PCC 7002 / PR-6) (Agmenellum quadruplicatum).